A 444-amino-acid polypeptide reads, in one-letter code: Phosphoglucosamine mutase (444 aa).

S102 acts as the Phosphoserine intermediate in catalysis. Positions 102, 241, 243, and 245 each coordinate Mg(2+). S102 is subject to Phosphoserine.

It belongs to the phosphohexose mutase family. It depends on Mg(2+) as a cofactor. Activated by phosphorylation.

The enzyme catalyses alpha-D-glucosamine 1-phosphate = D-glucosamine 6-phosphate. Catalyzes the conversion of glucosamine-6-phosphate to glucosamine-1-phosphate. The chain is Phosphoglucosamine mutase from Actinobacillus pleuropneumoniae serotype 5b (strain L20).